Here is a 597-residue protein sequence, read N- to C-terminus: Elongation factor 4 (597 aa).

The tr-type G domain occupies 2–184 (KNIRNFSIIA…TVVQKIPAPK (183 aa)). Residues 14-19 (DHGKST) and 131-134 (NKID) contribute to the GTP site.

This sequence belongs to the TRAFAC class translation factor GTPase superfamily. Classic translation factor GTPase family. LepA subfamily.

Its subcellular location is the cell inner membrane. The enzyme catalyses GTP + H2O = GDP + phosphate + H(+). In terms of biological role, required for accurate and efficient protein synthesis under certain stress conditions. May act as a fidelity factor of the translation reaction, by catalyzing a one-codon backward translocation of tRNAs on improperly translocated ribosomes. Back-translocation proceeds from a post-translocation (POST) complex to a pre-translocation (PRE) complex, thus giving elongation factor G a second chance to translocate the tRNAs correctly. Binds to ribosomes in a GTP-dependent manner. In Laribacter hongkongensis (strain HLHK9), this protein is Elongation factor 4.